The primary structure comprises 362 residues: 3-isopropylmalate dehydrogenase (362 aa).

Positions 97, 107, 135, and 225 each coordinate substrate. Positions 225, 249, and 253 each coordinate Mg(2+). Gly283–Asn295 serves as a coordination point for NAD(+).

Belongs to the isocitrate and isopropylmalate dehydrogenases family. LeuB type 1 subfamily. As to quaternary structure, homodimer. Requires Mg(2+) as cofactor. It depends on Mn(2+) as a cofactor.

Its subcellular location is the cytoplasm. It carries out the reaction (2R,3S)-3-isopropylmalate + NAD(+) = 4-methyl-2-oxopentanoate + CO2 + NADH. The protein operates within amino-acid biosynthesis; L-leucine biosynthesis; L-leucine from 3-methyl-2-oxobutanoate: step 3/4. Catalyzes the oxidation of 3-carboxy-2-hydroxy-4-methylpentanoate (3-isopropylmalate) to 3-carboxy-4-methyl-2-oxopentanoate. The product decarboxylates to 4-methyl-2 oxopentanoate. The polypeptide is 3-isopropylmalate dehydrogenase (Prochlorococcus marinus (strain SARG / CCMP1375 / SS120)).